The primary structure comprises 87 residues: UPF0250 protein BCc_307 (87 aa).

This sequence belongs to the UPF0250 family.

This Buchnera aphidicola subsp. Cinara cedri (strain Cc) protein is UPF0250 protein BCc_307.